Reading from the N-terminus, the 166-residue chain is FMN reductase (NADH) RutF (166 aa).

This sequence belongs to the non-flavoprotein flavin reductase family. RutF subfamily.

It carries out the reaction FMNH2 + NAD(+) = FMN + NADH + 2 H(+). In terms of biological role, catalyzes the reduction of FMN to FMNH2 which is used to reduce pyrimidine by RutA via the Rut pathway. This is FMN reductase (NADH) RutF from Cronobacter turicensis (strain DSM 18703 / CCUG 55852 / LMG 23827 / z3032).